Here is a 280-residue protein sequence, read N- to C-terminus: Shikimate dehydrogenase (NADP(+)) (280 aa).

Shikimate-binding positions include 20–22 (TLS) and T67. Catalysis depends on K71, which acts as the Proton acceptor. Shikimate is bound by residues N92 and D107. NADP(+) is bound by residues 131–135 (GAGGA), 154–159 (NRTIDK), and L224. Y226 provides a ligand contact to shikimate. G247 serves as a coordination point for NADP(+).

The protein belongs to the shikimate dehydrogenase family. In terms of assembly, homodimer.

It carries out the reaction shikimate + NADP(+) = 3-dehydroshikimate + NADPH + H(+). It functions in the pathway metabolic intermediate biosynthesis; chorismate biosynthesis; chorismate from D-erythrose 4-phosphate and phosphoenolpyruvate: step 4/7. Involved in the biosynthesis of the chorismate, which leads to the biosynthesis of aromatic amino acids. Catalyzes the reversible NADPH linked reduction of 3-dehydroshikimate (DHSA) to yield shikimate (SA). The polypeptide is Shikimate dehydrogenase (NADP(+)) (Carboxydothermus hydrogenoformans (strain ATCC BAA-161 / DSM 6008 / Z-2901)).